Reading from the N-terminus, the 145-residue chain is Basic phospholipase A2 KPA2 (145 aa).

Residues Met-1 to Ala-19 form the signal peptide. The propeptide occupies Ala-20–Leu-27. Disulfide bonds link Cys-38–Cys-97, Cys-52–Cys-144, Cys-54–Cys-70, Cys-69–Cys-125, Cys-76–Cys-118, Cys-86–Cys-111, and Cys-104–Cys-116. Residues Tyr-53, Gly-55, and Gly-57 each coordinate Ca(2+). The active site involves His-73. Asp-74 lines the Ca(2+) pocket. Asp-119 is a catalytic residue.

This sequence belongs to the phospholipase A2 family. Group I subfamily. D49 sub-subfamily. As to quaternary structure, monomer. Requires Ca(2+) as cofactor. As to expression, expressed by the venom gland.

The protein localises to the secreted. The enzyme catalyses a 1,2-diacyl-sn-glycero-3-phosphocholine + H2O = a 1-acyl-sn-glycero-3-phosphocholine + a fatty acid + H(+). In terms of biological role, snake venom phospholipase A2 (PLA2) that shows anticoagulant and neurotoxic activities. PLA2 catalyzes the calcium-dependent hydrolysis of the 2-acyl groups in 3-sn-phosphoglycerides. The polypeptide is Basic phospholipase A2 KPA2 (Bungarus caeruleus (Indian krait)).